The primary structure comprises 252 residues: MRILLSNDDGILAKGLGVLERAAESLGELHVVAPDREQSATSHSLTLHHPLRPVRLGERRWQVDGTPTDCVMLACEALLEARPDFVLSGINHGPNMGEDVLYSGTVAAAMEGLALGIPAIALSFAGNVLRADALLDTQVGAIRSLLHHLTGLPAFPADTLLNVNLPAVPGDEIRGIRLTRLGRRVFSDSIARMKDPWGRDILWIGGGSVEWSGAPDSDFRAVHDGYISVTPLHLDLTHRDVLNTSTEWWQEP.

A divalent metal cation-binding residues include Asp-8, Asp-9, Ser-39, and Asn-91.

This sequence belongs to the SurE nucleotidase family. The cofactor is a divalent metal cation.

Its subcellular location is the cytoplasm. It carries out the reaction a ribonucleoside 5'-phosphate + H2O = a ribonucleoside + phosphate. Functionally, nucleotidase that shows phosphatase activity on nucleoside 5'-monophosphates. The protein is 5'-nucleotidase SurE of Gemmatimonas aurantiaca (strain DSM 14586 / JCM 11422 / NBRC 100505 / T-27).